Reading from the N-terminus, the 614-residue chain is BPI fold-containing family B member 4 (614 aa).

A signal peptide spans methionine 1–threonine 18. An N-linked (GlcNAc...) asparagine glycan is attached at asparagine 273. Residues cysteine 295 and cysteine 332 are joined by a disulfide bond.

Belongs to the BPI/LBP/Plunc superfamily. BPI/LBP family. Expressed in nasal tissue.

The protein localises to the secreted. Its subcellular location is the cytoplasm. In terms of biological role, may have the capacity to recognize and bind specific classes of odorants. May act as a carrier molecule, transporting odorants across the mucus layer to access receptor sites. May serve as a primary defense mechanism by recognizing and removing potentially harmful odorants or pathogenic microorganisms from the mucosa or clearing excess odorant from mucus to enable new odorant stimuli to be received. This chain is BPI fold-containing family B member 4 (BPIFB4), found in Homo sapiens (Human).